Here is a 255-residue protein sequence, read N- to C-terminus: 3-deoxy-manno-octulosonate cytidylyltransferase (255 aa).

This sequence belongs to the KdsB family.

It is found in the cytoplasm. It catalyses the reaction 3-deoxy-alpha-D-manno-oct-2-ulosonate + CTP = CMP-3-deoxy-beta-D-manno-octulosonate + diphosphate. The protein operates within nucleotide-sugar biosynthesis; CMP-3-deoxy-D-manno-octulosonate biosynthesis; CMP-3-deoxy-D-manno-octulosonate from 3-deoxy-D-manno-octulosonate and CTP: step 1/1. It participates in bacterial outer membrane biogenesis; lipopolysaccharide biosynthesis. Functionally, activates KDO (a required 8-carbon sugar) for incorporation into bacterial lipopolysaccharide in Gram-negative bacteria. This is 3-deoxy-manno-octulosonate cytidylyltransferase from Cellvibrio japonicus (strain Ueda107) (Pseudomonas fluorescens subsp. cellulosa).